The chain runs to 187 residues: Ribosome-recycling factor (187 aa).

This sequence belongs to the RRF family.

The protein resides in the cytoplasm. In terms of biological role, responsible for the release of ribosomes from messenger RNA at the termination of protein biosynthesis. May increase the efficiency of translation by recycling ribosomes from one round of translation to another. The chain is Ribosome-recycling factor from Rhodopseudomonas palustris (strain BisB18).